We begin with the raw amino-acid sequence, 253 residues long: Imidazole glycerol phosphate synthase subunit HisF (253 aa).

Active-site residues include Asp-11 and Asp-130.

This sequence belongs to the HisA/HisF family. As to quaternary structure, heterodimer of HisH and HisF.

The protein resides in the cytoplasm. The enzyme catalyses 5-[(5-phospho-1-deoxy-D-ribulos-1-ylimino)methylamino]-1-(5-phospho-beta-D-ribosyl)imidazole-4-carboxamide + L-glutamine = D-erythro-1-(imidazol-4-yl)glycerol 3-phosphate + 5-amino-1-(5-phospho-beta-D-ribosyl)imidazole-4-carboxamide + L-glutamate + H(+). It functions in the pathway amino-acid biosynthesis; L-histidine biosynthesis; L-histidine from 5-phospho-alpha-D-ribose 1-diphosphate: step 5/9. Its function is as follows. IGPS catalyzes the conversion of PRFAR and glutamine to IGP, AICAR and glutamate. The HisF subunit catalyzes the cyclization activity that produces IGP and AICAR from PRFAR using the ammonia provided by the HisH subunit. This Ruegeria sp. (strain TM1040) (Silicibacter sp.) protein is Imidazole glycerol phosphate synthase subunit HisF.